The following is a 212-amino-acid chain: 3,4-dihydroxy-2-butanone 4-phosphate synthase (212 aa).

D-ribulose 5-phosphate is bound by residues 37 to 38 (RE), Asp-42, 150 to 154 (RRGHT), and Glu-174. Glu-38 provides a ligand contact to Mg(2+). His-153 is a Mg(2+) binding site.

The protein belongs to the DHBP synthase family. Homodimer. It depends on Mg(2+) as a cofactor. Mn(2+) serves as cofactor.

The catalysed reaction is D-ribulose 5-phosphate = (2S)-2-hydroxy-3-oxobutyl phosphate + formate + H(+). The protein operates within cofactor biosynthesis; riboflavin biosynthesis; 2-hydroxy-3-oxobutyl phosphate from D-ribulose 5-phosphate: step 1/1. In terms of biological role, catalyzes the conversion of D-ribulose 5-phosphate to formate and 3,4-dihydroxy-2-butanone 4-phosphate. The polypeptide is 3,4-dihydroxy-2-butanone 4-phosphate synthase (Shewanella pealeana (strain ATCC 700345 / ANG-SQ1)).